The following is a 765-amino-acid chain: Phosphoribosylformylglycinamidine synthase subunit PurL (765 aa).

His-41 is a catalytic residue. Residues Tyr-44 and Lys-83 each contribute to the ATP site. Glu-85 lines the Mg(2+) pocket. Substrate-binding positions include 86 to 89 (SHNH) and Arg-108. His-87 (proton acceptor) is an active-site residue. Mg(2+) is bound at residue Asp-109. Position 232 (Gln-232) interacts with substrate. Position 260 (Asp-260) interacts with Mg(2+). 304–306 (ESQ) provides a ligand contact to substrate. The ATP site is built by Asp-503 and Gly-540. Mg(2+) is bound at residue Asn-541. Position 543 (Ser-543) interacts with substrate.

It belongs to the FGAMS family. As to quaternary structure, monomer. Part of the FGAM synthase complex composed of 1 PurL, 1 PurQ and 2 PurS subunits.

It localises to the cytoplasm. The catalysed reaction is N(2)-formyl-N(1)-(5-phospho-beta-D-ribosyl)glycinamide + L-glutamine + ATP + H2O = 2-formamido-N(1)-(5-O-phospho-beta-D-ribosyl)acetamidine + L-glutamate + ADP + phosphate + H(+). It functions in the pathway purine metabolism; IMP biosynthesis via de novo pathway; 5-amino-1-(5-phospho-D-ribosyl)imidazole from N(2)-formyl-N(1)-(5-phospho-D-ribosyl)glycinamide: step 1/2. Part of the phosphoribosylformylglycinamidine synthase complex involved in the purines biosynthetic pathway. Catalyzes the ATP-dependent conversion of formylglycinamide ribonucleotide (FGAR) and glutamine to yield formylglycinamidine ribonucleotide (FGAM) and glutamate. The FGAM synthase complex is composed of three subunits. PurQ produces an ammonia molecule by converting glutamine to glutamate. PurL transfers the ammonia molecule to FGAR to form FGAM in an ATP-dependent manner. PurS interacts with PurQ and PurL and is thought to assist in the transfer of the ammonia molecule from PurQ to PurL. In Synechococcus sp. (strain WH7803), this protein is Phosphoribosylformylglycinamidine synthase subunit PurL.